The chain runs to 305 residues: Phosphopantetheine adenylyltransferase (305 aa).

Belongs to the eukaryotic CoaD family.

It is found in the cytoplasm. The protein localises to the nucleus. The enzyme catalyses (R)-4'-phosphopantetheine + ATP + H(+) = 3'-dephospho-CoA + diphosphate. Reversibly transfers an adenylyl group from ATP to 4'-phosphopantetheine, yielding dephospho-CoA (dPCoA) and pyrophosphate. Plays a role in the physiological regulation of the intracellular CoA concentration. The polypeptide is Phosphopantetheine adenylyltransferase (CAB4) (Saccharomyces cerevisiae (strain ATCC 204508 / S288c) (Baker's yeast)).